The following is a 24-amino-acid chain: Lectin (24 aa).

The span at 1 to 18 (AEEQSFSSTKFSTDQPNL) shows a compositional bias: polar residues. The segment at 1 to 24 (AEEQSFSSTKFSTDQPNLILQGDA) is disordered.

This sequence belongs to the leguminous lectin family. In terms of assembly, homotetramer.

This chain is Lectin, found in Crotalaria juncea (Sunn hemp).